Reading from the N-terminus, the 169-residue chain is MTDNTPLTLAAITGAHGVRGDVRLKLLGEGLEALKAHSSFNEGTLTLKSVRSDNKGGAIARFAEVQGREQAEKLRGTTLTVPREALPPLEEGEYYFADLIGLDAVTDAGKRVGKVIDVHNYGATDIVEIAKDPVPEKGMKTFMVPMTTHAVVEWNGERIVIATDFAHPD.

The PRC barrel domain maps to 91–167; it reads EGEYYFADLI…RIVIATDFAH (77 aa).

The protein belongs to the RimM family. Binds ribosomal protein uS19.

The protein localises to the cytoplasm. In terms of biological role, an accessory protein needed during the final step in the assembly of 30S ribosomal subunit, possibly for assembly of the head region. Essential for efficient processing of 16S rRNA. May be needed both before and after RbfA during the maturation of 16S rRNA. It has affinity for free ribosomal 30S subunits but not for 70S ribosomes. This is Ribosome maturation factor RimM from Erythrobacter litoralis (strain HTCC2594).